Here is a 987-residue protein sequence, read N- to C-terminus: ATP-dependent 6-phosphofructokinase subunit alpha (987 aa).

The interval 1–580 (MQSQDSCYGV…LYENFLSTTV (580 aa)) is N-terminal catalytic PFK domain 1. At Ser3 the chain carries Phosphoserine. Lys89 is covalently cross-linked (Glycyl lysine isopeptide (Lys-Gly) (interchain with G-Cter in ubiquitin)). Residues Ser166, Ser179, Ser185, Ser189, and Ser192 each carry the phosphoserine modification. ATP is bound at residue Gly215. Ser217 bears the Phosphoserine mark. Residues 278-279 (RS) and 308-311 (GDGS) contribute to the ATP site. Asp309 provides a ligand contact to Mg(2+). Beta-D-fructose 6-phosphate is bound by residues 354 to 356 (SID), Arg391, and 398 to 400 (MGR). Catalysis depends on Asp356, which acts as the Proton acceptor. The residue at position 450 (Thr450) is a Phosphothreonine. Residues Glu455, Lys482, and 488–491 (HVQR) each bind beta-D-fructose 6-phosphate. The interval 581-594 (KDDGSELLPVSDRL) is interdomain linker. Residues 595–987 (NIGIVHVGAP…EVAALAAENK (393 aa)) form a C-terminal regulatory PFK domain 2 region. Lys625 participates in a covalent cross-link: Glycyl lysine isopeptide (Lys-Gly) (interchain with G-Cter in ubiquitin). Beta-D-fructose 2,6-bisphosphate-binding positions include Arg665, 722-726 (TVSNN), Arg760, 767-769 (QGG), Glu827, Arg853, 859-862 (HVQQ), and Arg952.

This sequence belongs to the phosphofructokinase type A (PFKA) family. ATP-dependent PFK group I subfamily. Eukaryotic two domain clade 'E' sub-subfamily. Heterooctamer of 4 alpha and 4 beta chains. Mg(2+) is required as a cofactor.

The protein localises to the cytoplasm. The protein resides in the mitochondrion outer membrane. It carries out the reaction beta-D-fructose 6-phosphate + ATP = beta-D-fructose 1,6-bisphosphate + ADP + H(+). It participates in carbohydrate degradation; glycolysis; D-glyceraldehyde 3-phosphate and glycerone phosphate from D-glucose: step 3/4. Allosterically activated by ADP, AMP, or fructose 2,6-bisphosphate, and allosterically inhibited by ATP or citrate. In terms of biological role, catalyzes the phosphorylation of D-fructose 6-phosphate to fructose 1,6-bisphosphate by ATP, the first committing step of glycolysis. The chain is ATP-dependent 6-phosphofructokinase subunit alpha (PFK1) from Saccharomyces cerevisiae (strain ATCC 204508 / S288c) (Baker's yeast).